The primary structure comprises 511 residues: Membrane-bound lytic murein transglycosylase F (511 aa).

A signal peptide spans 1–19 (MKKLKINYLLIGIVTLLLA). Residues 20–269 (AALWPSIPWS…RLEEKYLGHG (250 aa)) form a non-LT domain region. The segment at 270-511 (NDFDYVDTRT…ARMKLPGHLY (242 aa)) is LT domain. Glutamate 314 is a catalytic residue.

It in the N-terminal section; belongs to the bacterial solute-binding protein 3 family. In the C-terminal section; belongs to the transglycosylase Slt family.

The protein resides in the cell outer membrane. It catalyses the reaction Exolytic cleavage of the (1-&gt;4)-beta-glycosidic linkage between N-acetylmuramic acid (MurNAc) and N-acetylglucosamine (GlcNAc) residues in peptidoglycan, from either the reducing or the non-reducing ends of the peptidoglycan chains, with concomitant formation of a 1,6-anhydrobond in the MurNAc residue.. Murein-degrading enzyme that degrades murein glycan strands and insoluble, high-molecular weight murein sacculi, with the concomitant formation of a 1,6-anhydromuramoyl product. Lytic transglycosylases (LTs) play an integral role in the metabolism of the peptidoglycan (PG) sacculus. Their lytic action creates space within the PG sacculus to allow for its expansion as well as for the insertion of various structures such as secretion systems and flagella. The polypeptide is Membrane-bound lytic murein transglycosylase F (Klebsiella pneumoniae subsp. pneumoniae (strain ATCC 700721 / MGH 78578)).